The following is a 197-amino-acid chain: MSASRFIKCVTVGDGAVGKTCMLISYTSNTFPTDYVPTVFDNFSANVVVDGNTVNLGLWDTAGQEDYNRLRPLSYRGADVFLLAFSLISKASYENVSKKWIPELKHYAPGVPIILVGTKLDLRDDKQFFVDHPGAVPITTAQGEELRKQIGAPYYIECSSKTQLNVKGVFDAAIKVVLQPPKAKKKKKAQRGACSIL.

13 to 20 (GDGAVGKT) provides a ligand contact to GTP. An Effector region motif is present at residues 35 to 43 (YVPTVFDNF). Residues 60–64 (DTAGQ) and 118–121 (TKLD) contribute to the GTP site. Cys-194 carries the post-translational modification Cysteine methyl ester. Cys-194 is lipidated: S-geranylgeranyl cysteine. Positions 195–197 (SIL) are cleaved as a propeptide — removed in mature form.

Belongs to the small GTPase superfamily. Rho family.

The protein localises to the cytoplasm. It localises to the membrane. Functionally, inactive GDP-bound Rho GTPases reside in the cytosol, are found in a complex with Rho GDP-dissociation inhibitors (Rho GDIs), and are released from the GDI protein in order to translocate to membranes upon activation. The polypeptide is Rac-like GTP-binding protein 6 (RAC6) (Oryza sativa subsp. japonica (Rice)).